A 182-amino-acid chain; its full sequence is UPF0301 protein NMC1274 (182 aa).

Belongs to the UPF0301 (AlgH) family.

The polypeptide is UPF0301 protein NMC1274 (Neisseria meningitidis serogroup C / serotype 2a (strain ATCC 700532 / DSM 15464 / FAM18)).